The primary structure comprises 364 residues: DNA replication and repair protein RecF (364 aa).

30–37 contacts ATP; sequence GNNAQGKT.

The protein belongs to the RecF family.

It is found in the cytoplasm. The RecF protein is involved in DNA metabolism; it is required for DNA replication and normal SOS inducibility. RecF binds preferentially to single-stranded, linear DNA. It also seems to bind ATP. This Clostridium botulinum (strain ATCC 19397 / Type A) protein is DNA replication and repair protein RecF.